A 976-amino-acid polypeptide reads, in one-letter code: DNA-directed RNA polymerase 1, mitochondrial (976 aa).

Residues 1–42 constitute a mitochondrion transit peptide; sequence MWRNILGRASLRKVKFLSDSSSSGTHYPVNRVRGILSSVNLS. Active-site residues include Asp677, Lys752, and Asp909.

It belongs to the phage and mitochondrial RNA polymerase family.

Its subcellular location is the mitochondrion. The enzyme catalyses RNA(n) + a ribonucleoside 5'-triphosphate = RNA(n+1) + diphosphate. Functionally, DNA-dependent RNA polymerase catalyzes the transcription of DNA into RNA using the four ribonucleoside triphosphates as substrates. This Arabidopsis thaliana (Mouse-ear cress) protein is DNA-directed RNA polymerase 1, mitochondrial (RPOT1).